We begin with the raw amino-acid sequence, 132 residues long: Small ribosomal subunit protein eS12 (132 aa).

Ala-2 is subject to N-acetylalanine. At Lys-129 the chain carries N6-succinyllysine.

The protein belongs to the eukaryotic ribosomal protein eS12 family. As to quaternary structure, part of the small subunit (SSU) processome, composed of more than 70 proteins and the RNA chaperone small nucleolar RNA (snoRNA) U3. Subunit of the 40S ribosomal complex.

The protein resides in the nucleus. The protein localises to the nucleolus. Functionally, part of the small subunit (SSU) processome, first precursor of the small eukaryotic ribosomal subunit. During the assembly of the SSU processome in the nucleolus, many ribosome biogenesis factors, an RNA chaperone and ribosomal proteins associate with the nascent pre-rRNA and work in concert to generate RNA folding, modifications, rearrangements and cleavage as well as targeted degradation of pre-ribosomal RNA by the RNA exosome. Subunit of the 40S ribosomal complex. This chain is Small ribosomal subunit protein eS12 (Rps12), found in Mus musculus (Mouse).